We begin with the raw amino-acid sequence, 175 residues long: MALNVFQKQEVVKELAGVATKAYSLIVAEYAGITVSQMTAMRKQARESGVYLKVVKNKLAARALGDTEYAVIKEKLIGPLLYAFSLEDPGAAGRLIKEFSKKHDKLKSKAVSLGGVLYPAGHVDVLASLPTRLQALAMLARVLSEPVTLFARAIKAVADDKSETVAVSAPETSEA.

It belongs to the universal ribosomal protein uL10 family. As to quaternary structure, part of the ribosomal stalk of the 50S ribosomal subunit. The N-terminus interacts with L11 and the large rRNA to form the base of the stalk. The C-terminus forms an elongated spine to which L12 dimers bind in a sequential fashion forming a multimeric L10(L12)X complex.

Functionally, forms part of the ribosomal stalk, playing a central role in the interaction of the ribosome with GTP-bound translation factors. This Xylella fastidiosa (strain M12) protein is Large ribosomal subunit protein uL10.